The primary structure comprises 382 residues: Homeobox protein SHOOT MERISTEMLESS (382 aa).

Positions 26 to 59 (MMMMMPPIMTSHQHHGHDHQHQQQEHDGYAYQSH) are disordered. Over residues 44–53 (HQHQQQEHDG) the composition is skewed to basic and acidic residues. In terms of domain architecture, ELK spans 262–282 (ELKGQLLRKYSGYLGSLKQEF). Positions 283-346 (MKKRKKGKLP…NQRKRHWKPS (64 aa)) form a DNA-binding region, homeobox; TALE-type.

It belongs to the TALE/KNOX homeobox family. Forms homodimers. May form heterodimeric complexes with TALE/BELL proteins BEL1, BLH2, BLH3, BLH8/PNF, BLH9/PNY and ATH1. Interacts with CCT8. Binds to MBP2C; this interaction reduces RNA binding capacity. Interacts with FTIP3 and FTIP4. In terms of tissue distribution, expressed in all four types of shoot apical meristems (SAM) i.e. in vegetative, axillary, inflorescence and floral.

The protein localises to the nucleus. Its subcellular location is the cell junction. It localises to the plasmodesma. The protein resides in the cytoplasm. It is found in the endosome. The protein localises to the cell membrane. Functionally, required for shoot apical meristem (SAM) formation during embryogenesis. Negatively regulates ASYMMETRIC LEAVES1 (AS1) and ASYMMETRIC LEAVES2 (AS2 or LBD6). Probably binds to the DNA sequence 5'-TGAC-3'. Binds to RNA. In Arabidopsis thaliana (Mouse-ear cress), this protein is Homeobox protein SHOOT MERISTEMLESS.